Here is a 198-residue protein sequence, read N- to C-terminus: MTERSLNNLILASSSKRRIALLKQINIEPGLILPADIDEAPLKKELPKDYSIRMAKSKAEKIQSSNPNYFVLGVDTVVACGRRILLKAENVEQAEKCIRLLSGRRHRVYTSVCLLTPDQSKQHIRTVVTIVKFKRLSEQEIKYYLASEEWKNRAGGCNIQGLAGVFVLFLRGSYSSVIGLPLHETYCLLSNYFNFNLY.

Aspartate 75 serves as the catalytic Proton acceptor.

Belongs to the Maf family. YhdE subfamily. A divalent metal cation is required as a cofactor.

The protein resides in the cytoplasm. It carries out the reaction dTTP + H2O = dTMP + diphosphate + H(+). The enzyme catalyses UTP + H2O = UMP + diphosphate + H(+). Its function is as follows. Nucleoside triphosphate pyrophosphatase that hydrolyzes dTTP and UTP. May have a dual role in cell division arrest and in preventing the incorporation of modified nucleotides into cellular nucleic acids. This Wolbachia sp. subsp. Drosophila simulans (strain wRi) protein is dTTP/UTP pyrophosphatase.